The following is a 481-amino-acid chain: Beta-amyrin 28-monooxygenase (481 aa).

The helical transmembrane segment at 4–24 threads the bilayer; sequence FYVPLLSLFVLFVSLSFYFLF. Heme is bound at residue Cys428.

The protein belongs to the cytochrome P450 family. Heme is required as a cofactor.

The protein localises to the membrane. It catalyses the reaction beta-amyrin + 3 reduced [NADPH--hemoprotein reductase] + 3 O2 = oleanolate + 3 oxidized [NADPH--hemoprotein reductase] + 4 H2O + 4 H(+). Catalyzes the oxidation of the methyl group to a carboxyl group at the C-28 position of beta-amyrin to form oleanolate. In Kalopanax septemlobus (Castor aralia), this protein is Beta-amyrin 28-monooxygenase.